An 862-amino-acid chain; its full sequence is Piwi-like protein 1 (862 aa).

The segment covering 1-13 (MTGRARARARGRA) has biased composition (basic residues). Residues 1–48 (MTGRARARARGRARGQETVQHVGAAASQQPGYIPPRPQQSPTEGDLVG) form a disordered region. Position 14 is an omega-N-methylarginine; by PRMT5; alternate (arginine 14). Position 14 is a symmetric dimethylarginine; by PRMT5; alternate (arginine 14). Arginine 49 carries the omega-N-methylarginine; by PRMT5 modification. Arginine 53 carries the omega-N-methylarginine; alternate modification. Position 53 is a symmetric dimethylarginine; alternate (arginine 53). Positions 218–225 (RRLLKIMN) match the D-box motif. One can recognise a PAZ domain in the interval 279 to 392 (TVLDFMFNLY…LIPELCYLTG (114 aa)). Residues 317-319 (TYR) are required for binding 2'-O-methylated 3'-end of piRNAs. Arginine 371 is modified (omega-N-methylarginine; by PRMT5). Residues 480 to 616 (SKETRGAPLI…LQMNCKMGGE (137 aa)) form an MID region region. Residues 556-848 (IVVCLLSSNR…LAFLVGQSIH (293 aa)) enclose the Piwi domain. Active-site residues include aspartate 633, glutamate 671, aspartate 703, and histidine 837.

The protein belongs to the argonaute family. Piwi subfamily. In terms of assembly, interacts (via Piwi domain) with DICER1, suggesting that it forms ribonucleoprotein RISC complexes; this interaction is regulated by HSP90AB1 activity. Interacts with MAEL, KIF17, PABPC1, PRMT5 and WDR77. Interacts (when methylated on arginine residues) with TDRD1, TDRKH/TDRD2, RNF17/TDRD4, TDRD6, TDRD7 and TDRD9. Interacts with CLOCK. Interacts with MOV10L1. Interacts with ANAPC10; interaction oly takes place following piRNA-binding. Interacts with RNF8; leading to sequester RNF8 in the cytoplasm. Interacts with Tex19.1 and, probably, Tex19.2. Mg(2+) is required as a cofactor. Post-translationally, ubiquitinated by the anaphase promoting complex/cyclosome (APC/C) in late spermatids, leading to its degradation. Ubiquitination only takes place following piRNA-binding in adult testis. Ubiquitination and degradation in late spermatogenesis by APC/C is probably required to release RNF8 from the cytoplasm and promote histone to protamine exchange by RNF8. In terms of processing, arginine methylation by PRMT5 is required for the interaction with Tudor domain-containing protein (TDRD1, TDRKH/TDRD2, RNF17/TDRD4, TDRD6, TDRD7 and TDRD9) and subsequent localization to the meiotic nuage, also named P granule. Expressed in brain. Expressed in testis, specifically in spermatocytes (at protein level). Only detected in germ lineage cells of adult testis. Expressed in male gonads 2 weeks after birth at the initiation of spermatogenesis, but not expressed in female gonads.

The protein localises to the cytoplasm. In terms of biological role, endoribonuclease that plays a central role in postnatal germ cells by repressing transposable elements and preventing their mobilization, which is essential for the germline integrity. Acts via the piRNA metabolic process, which mediates the repression of transposable elements during meiosis by forming complexes composed of piRNAs and Piwi proteins and governs the methylation and subsequent repression of transposons. Directly binds methylated piRNAs, a class of 24 to 30 nucleotide RNAs that are generated by a Dicer-independent mechanism and are primarily derived from transposons and other repeated sequence elements. Strongly prefers a uridine in the first position of their guide (g1U preference, also named 1U-bias). Not involved in the piRNA amplification loop, also named ping-pong amplification cycle. Acts as an endoribonuclease that cleaves transposon messenger RNAs. Besides their function in transposable elements repression, piRNAs are probably involved in other processes during meiosis such as translation regulation. Probable component of some RISC complex, which mediates RNA cleavage and translational silencing. Also plays a role in the formation of chromatoid bodies and is required for some miRNAs stability. Required to sequester RNF8 in the cytoplasm until late spermatogenesis; RNF8 being released upon ubiquitination and degradation of PIWIL1. The chain is Piwi-like protein 1 from Mus musculus (Mouse).